We begin with the raw amino-acid sequence, 496 residues long: MADTVEKVPTVVESSSSSTVEASNSAEKTEPTTEKKKWGDVEDDDDEEEAVSELNSLSIKEEEKPDSILEEPEDSNIKAVTSGDTPYTSASRFEDLNLSPELMKGLYVEMKFEKPSKIQAISLPMIMTPPHKHLIAQAHNGSGKTTCFVLGMLSRVDPTLREPQALCICPTRELANQNMEVLQKMGKFTGITAELAVPDSTRGAPAATRGAPVSAHVVIGTPGTLKKWMAFKRLGLNHLKILVFDEADHMLATDGFRDDSLKIMKDIGRVNPNFQVLLFSATFNETVKDFVARTVKDPNQLFVKREDLALDSVKQYKVVCPKEQNKIEVIKDQIMELGDIGQTIIFVKTKASAQKVHKALAEMGYDVTSVHGNLTESDRDKIVKEFKECLTQVLIATDVIARGFDQQRVNLVVNYNLPTKYETGEPDYEVYLHRVGRAGRFGRKGAVFNLLLDDGWDKEVMEKIEKYFEANVKEIKSWNSEEEYKSALKEAGLLDE.

The interval 1–91 (MADTVEKVPT…SGDTPYTSAS (91 aa)) is disordered. At A2 the chain carries N-acetylalanine. Positions 7–25 (KVPTVVESSSSSTVEASNS) are enriched in low complexity. Basic and acidic residues predominate over residues 27–40 (EKTEPTTEKKKWGD). Residues 41–51 (VEDDDDEEEAV) are compositionally biased toward acidic residues. The segment covering 78–91 (KAVTSGDTPYTSAS) has biased composition (polar residues). Residues 91-120 (SRFEDLNLSPELMKGLYVEMKFEKPSKIQA) carry the Q motif motif. The Helicase ATP-binding domain occupies 125 to 301 (MIMTPPHKHL…ARTVKDPNQL (177 aa)). Residue 138 to 145 (AHNGSGKT) coordinates ATP. Residues 245 to 248 (DEAD) carry the DEAD box motif. The region spanning 329–483 (VIKDQIMELG…EIKSWNSEEE (155 aa)) is the Helicase C-terminal domain.

It belongs to the DEAD box helicase family. DDX19/DBP5 subfamily. Interacts with NUP214 (via N-terminus). As to expression, constitutively expressed.

It localises to the cytoplasm. The protein localises to the nucleus. It carries out the reaction ATP + H2O = ADP + phosphate + H(+). ATP-dependent RNA helicase essential for mRNA export from the nucleus. Plays an important role in the positive regulation of CBF/DREB transcription factors. This Arabidopsis thaliana (Mouse-ear cress) protein is DEAD-box ATP-dependent RNA helicase 38 (RH38).